A 324-amino-acid polypeptide reads, in one-letter code: Probable cell division protein WhiA (324 aa).

A DNA-binding region (H-T-H motif) is located at residues 276–310 (TLKELGEMMQGGKVSKSGINHRLRKIDEFADKLRN).

It belongs to the WhiA family.

In terms of biological role, involved in cell division and chromosome segregation. The protein is Probable cell division protein WhiA of Shouchella clausii (strain KSM-K16) (Alkalihalobacillus clausii).